We begin with the raw amino-acid sequence, 336 residues long: Sodium/bile acid cotransporter 7 (336 aa).

Topologically, residues 1–10 (MGLIARVRKE) are cytoplasmic. The chain crosses the membrane as a helical span at residues 11–31 (WFIIGIVLVITFAKLQPSVGV). At 32 to 37 (KGGPLH) the chain is on the extracellular side. A helical transmembrane segment spans residues 38–58 (PEITITYVAVSVIFFNSGLSL). Residues 59–71 (KTEELASALMHVK) are Cytoplasmic-facing. A helical transmembrane segment spans residues 72-92 (LHFFVQTFTLVFFPIAIWLLL). Residues 93–116 (KVLALTAINEWLLRGLQTVACMPP) lie on the Extracellular side of the membrane. A helical membrane pass occupies residues 117 to 137 (PVSSAVILTKAVGGNEAAAIF). N138 is a topological domain (cytoplasmic). Residues 139 to 159 (SAFGSFLGIVVTPLLLLVFLG) traverse the membrane as a helical segment. Residues 160–163 (SSSS) lie on the Extracellular side of the membrane. Residues 164–184 (VPFTSIFSQLFMTVVVPLIVG) traverse the membrane as a helical segment. Residues 185 to 201 (QVCRRFLRECLDRRKPP) are Cytoplasmic-facing. Residues 202 to 222 (FGAVSSVVLLMIIYSTFCDTF) form a helical membrane-spanning segment. Residues 223–233 (NNPNIELDHLS) lie on the Extracellular side of the membrane. The chain crosses the membrane as a helical span at residues 234-254 (LLTVVFIIFSIQLSFMALIFF). The Cytoplasmic portion of the chain corresponds to 255-270 (LSTRKSSGFSAADSVA). The helical transmembrane segment at 271–291 (IMFCATHKSLTLGIPMLKIVF) threads the bilayer. At 292 to 298 (EGYEHLS) the chain is on the extracellular side. A helical membrane pass occupies residues 299–319 (LISVPLLIYHPAQILLGSVLL). The Cytoplasmic portion of the chain corresponds to 320–336 (PSIKTWMSGRQKTLTPI).

It belongs to the bile acid:sodium symporter (BASS) (TC 2.A.28) family.

The protein localises to the cell membrane. The protein resides in the endoplasmic reticulum membrane. It is found in the golgi apparatus membrane. Its function is as follows. Involved in teeth and skeletal development. Has an essential role in the biosynthesis and trafficking of glycosaminoglycans and glycoproteins to produce a proper functioning extracellular matrix. Required for extracellular matrix mineralization. Also involved in the regulation of cellular calcium homeostasis. Does not show transport activity towards bile acids or steroid sulfates. This Danio rerio (Zebrafish) protein is Sodium/bile acid cotransporter 7 (slc10a7).